We begin with the raw amino-acid sequence, 1390 residues long: DNA-directed RNA polymerase subunit beta'' (1390 aa).

Cys-220, Cys-291, Cys-298, and Cys-301 together coordinate Zn(2+).

It belongs to the RNA polymerase beta' chain family. RpoC2 subfamily. In terms of assembly, in plastids the minimal PEP RNA polymerase catalytic core is composed of four subunits: alpha, beta, beta', and beta''. When a (nuclear-encoded) sigma factor is associated with the core the holoenzyme is formed, which can initiate transcription. It depends on Zn(2+) as a cofactor.

The protein resides in the plastid. It is found in the chloroplast. It catalyses the reaction RNA(n) + a ribonucleoside 5'-triphosphate = RNA(n+1) + diphosphate. In terms of biological role, DNA-dependent RNA polymerase catalyzes the transcription of DNA into RNA using the four ribonucleoside triphosphates as substrates. This is DNA-directed RNA polymerase subunit beta'' from Populus alba (White poplar).